Reading from the N-terminus, the 246-residue chain is MSQVTMRDMLKAGVHFGHQTRYWNPKMDKYIFGARNKIHIINLEKTLPMFNDALRFVEKLAAGKNKILFVGTKRSAGKIVREEAARCGSPYVDHRWLGGMLTNYKTIRASIKRLRELEAQSQDGTFEKLTKKEALMRTRDLEKLERSLGGIKDMGGLPDAMFVIDVDHERIAISEANKLGIPVIGVVDTNSSPEGVDYIIPGNDDAIRAVQLYLGSMADAVLRGRQNGAGGADEFVEEVASEAAQG.

It belongs to the universal ribosomal protein uS2 family.

In Stutzerimonas stutzeri (strain A1501) (Pseudomonas stutzeri), this protein is Small ribosomal subunit protein uS2.